The sequence spans 502 residues: MFTLQEICRKNIYFLPDWLNEHVAQRLGLYWEKHGSLQRIGDDYVLIQQDLIISINEALRMAGEEGNDEVVQLLLQWEGNIFYAIIGALEGDHDSLAYKLYSQIRDCHTILPLIQDPKIFEKCHDLDESCNISCLVLNAVKHDMLCILQEYKMLLSGGDIQEVFEIACRSLKYDIVTWMGQNIAIYNPGVIFDIAFDKMNVSLLSIGYTLLFNHHINHINHENIDVNSLLTQHLEWAAGMGLLHFMLETLKYGGDVTIIVLSAAVKYDHRKVLDYFLRRKNLYREDIEELLLLAISADCSKKTLNLLLSYLNYSIDNIRKKILQYVKEYETTLIIKILWKKKKINLIEPILADFIGYHSYTYMKGFMRDFSIHPERIIKMAARESREDLIIKFSKNVCKEPKDRLHYLKNLVYTMKHKGGKQLLIYTIHNLYKASCLESKEMFKLARFYARHDARIQFKSICHDLSKQNINIKNLLLECLGIAIKKNYFQLIETIEMTMNYE.

Belongs to the asfivirus MGF 505 family.

Functionally, plays a role in virus cell tropism, and may be required for efficient virus replication in macrophages. The sequence is that of Protein MGF 505-5R from African swine fever virus (isolate Tick/Malawi/Lil 20-1/1983) (ASFV).